The chain runs to 192 residues: Adenine phosphoribosyltransferase 2 (192 aa).

The protein belongs to the purine/pyrimidine phosphoribosyltransferase family. As to quaternary structure, homodimer.

The protein localises to the cytoplasm. It catalyses the reaction AMP + diphosphate = 5-phospho-alpha-D-ribose 1-diphosphate + adenine. It functions in the pathway purine metabolism; AMP biosynthesis via salvage pathway; AMP from adenine: step 1/1. Functionally, catalyzes a salvage reaction resulting in the formation of AMP, that is energically less costly than de novo synthesis. May contribute to the recycling of adenine into adenylate nucleotides and the inactivation of cytokinins by phosphoribosylation. Possesses low activity toward adenine and cytokinins. The protein is Adenine phosphoribosyltransferase 2 (APT2) of Arabidopsis thaliana (Mouse-ear cress).